Reading from the N-terminus, the 364-residue chain is MSAPKKIVVLPGDHVGQEITAEAIKVLKAISDVRSNVKFDFENHLIGGAAIDATGVPLPDEALEASKKADAVLLGAVGGPKWGTGSVRPEQGLLKIRKELQLYANLRPCNFASDSLLDLSPIKPQFAKGTDFVVVRELVGGIYFGKRKEDDGDGVAWDSEQYTVPEVQRITRMAAFMALQHEPPLPIWSLDKANVLASSRLWRKTVEETIKNEFPTLKVQHQLIDSAAMILVKNPTHLNGIIITSNMFGDIISDEASVIPGSLGLLPSASLASLPDKNTAFGLYEPCHGSAPDLPKNKVNPIATILSAAMMLKLSLNLPEEGKAIEDAVKKVLDAGIRTGDLGGSNSTTEVGDAVAEEVKKILA.

79-90 (GPKWGTGSVRPE) serves as a coordination point for NAD(+). The substrate site is built by R97, R107, R136, and D225. 3 residues coordinate Mg(2+): D225, D250, and D254. Residue 289-300 (GSAPDLPKNKVN) participates in NAD(+) binding.

This sequence belongs to the isocitrate and isopropylmalate dehydrogenases family. In terms of assembly, homodimer. Requires Mg(2+) as cofactor. Mn(2+) is required as a cofactor.

It localises to the cytoplasm. The enzyme catalyses (2R,3S)-3-isopropylmalate + NAD(+) = 4-methyl-2-oxopentanoate + CO2 + NADH. It participates in amino-acid biosynthesis; L-leucine biosynthesis; L-leucine from 3-methyl-2-oxobutanoate: step 3/4. Catalyzes the oxidation of 3-carboxy-2-hydroxy-4-methylpentanoate (3-isopropylmalate) to 3-carboxy-4-methyl-2-oxopentanoate. The product decarboxylates to 4-methyl-2 oxopentanoate. This chain is 3-isopropylmalate dehydrogenase (LEU2), found in Saccharomyces cerevisiae (strain ATCC 204508 / S288c) (Baker's yeast).